The following is a 365-amino-acid chain: Endophilin-B1 (365 aa).

Methionine 1 bears the N-acetylmethionine mark. The segment at 1 to 30 (MNIMDFNVKKLAADAGTFLSRAVQFTEEKL) is membrane-binding amphipathic helix. Residues 1 to 37 (MNIMDFNVKKLAADAGTFLSRAVQFTEEKLGQAEKTE) form a required for membrane binding region. In terms of domain architecture, BAR spans 27–261 (EEKLGQAEKT…LGSFPSNYHS (235 aa)). Threonine 145 carries the post-translational modification Phosphothreonine; by CDK5. Residues 155–195 (YKTIAKERKLLQNKRLDLDAAKTRLKKAKAAETRASSEQEL) are a coiled coil. In terms of domain architecture, SH3 spans 305 to 365 (GGSRRARVLY…VPITYLELLN (61 aa)).

The protein belongs to the endophilin family. As to quaternary structure, homodimer, and heterodimer with SH3GLB2. Binds BAX; induction of apoptosis augments BAX binding. Binds DNM1, HTT, AMPH, BIN1 and ARFGAP1. Interacts with UVRAG; UVRAG bridges the interaction to BECN1 indicative for an association with the PI3K complex II (PI3KC3-C2). Phosphorylated at Thr-145 by CDK5; this phosphorylation is required for autophagy induction in starved neurons and facilitates homodimerization.

The protein resides in the cytoplasm. It is found in the golgi apparatus membrane. It localises to the mitochondrion outer membrane. Its subcellular location is the cytoplasmic vesicle. The protein localises to the autophagosome membrane. The protein resides in the midbody. Functionally, may be required for normal outer mitochondrial membrane dynamics. Required for coatomer-mediated retrograde transport in certain cells. May recruit other proteins to membranes with high curvature. May promote membrane fusion. Involved in activation of caspase-dependent apoptosis by promoting BAX/BAK1 activation. Involved in caspase-independent apoptosis during nutrition starvation and involved in the regulation of autophagy. Activates lipid kinase activity of PIK3C3 during autophagy probably by associating with the PI3K complex II (PI3KC3-C2). Associated with PI3KC3-C2 during autophagy may regulate the trafficking of ATG9A from the Golgi complex to the peripheral cytoplasm for the formation of autophagosomes by inducing Golgi membrane tubulation and fragmentation. Involved in regulation of degradative endocytic trafficking and cytokinesis, probably in the context of PI3KC3-C2. This chain is Endophilin-B1 (SH3GLB1), found in Bos taurus (Bovine).